A 185-amino-acid polypeptide reads, in one-letter code: Ribosome-recycling factor (185 aa).

It belongs to the RRF family.

The protein localises to the cytoplasm. Its function is as follows. Responsible for the release of ribosomes from messenger RNA at the termination of protein biosynthesis. May increase the efficiency of translation by recycling ribosomes from one round of translation to another. This is Ribosome-recycling factor from Parafrankia sp. (strain EAN1pec).